The chain runs to 133 residues: Large ribosomal subunit protein uL15 (133 aa).

The disordered stretch occupies residues 1 to 62 (MALHNLQPAP…GQQPLQRRLP (62 aa)). Residues 32–45 (TRGQKGQKSRTGYS) show a composition bias toward polar residues.

It belongs to the universal ribosomal protein uL15 family. As to quaternary structure, part of the 50S ribosomal subunit.

Binds to the 23S rRNA. The chain is Large ribosomal subunit protein uL15 from Nitratiruptor sp. (strain SB155-2).